Consider the following 265-residue polypeptide: Chorismate mutase 2 (265 aa).

A Chorismate mutase domain is found at 10–265; sequence GSGCSNVLSL…EVEYLLRRLD (256 aa).

Homodimer. Expressed in roots, stems, cauline leaves and flowers, and at lower levels in rosette leaves and siliques.

Its subcellular location is the cytoplasm. The protein resides in the cytosol. It carries out the reaction chorismate = prephenate. The protein operates within metabolic intermediate biosynthesis; prephenate biosynthesis; prephenate from chorismate: step 1/1. With respect to regulation, no allosteric regulation. The sequence is that of Chorismate mutase 2 from Arabidopsis thaliana (Mouse-ear cress).